We begin with the raw amino-acid sequence, 2435 residues long: ATP-binding cassette sub-family A member 2 (2435 aa).

An N-linked (GlcNAc...) asparagine glycan is attached at Asn14. 2 consecutive transmembrane segments (helical) span residues 22–42 and 54–74; these read PWVL…LLGL and AFYT…QSLC. N-linked (GlcNAc...) asparagine glycans are attached at residues Asn89, Asn168, and Asn173. Gln271 is modified (N5-methylglutamine). N-linked (GlcNAc...) asparagine glycosylation is found at Asn305, Asn368, Asn379, Asn420, Asn432, Asn476, Asn484, Asn494, Asn530, Asn544, Asn590, Asn600, and Asn628. The next 6 helical transmembrane spans lie at 699 to 719, 750 to 770, 782 to 802, 813 to 833, 857 to 877, and 893 to 913; these read FLFV…VYSV, VAWF…LTAI, VVII…FCFL, ASAC…YVAI, AFGL…GIQW, and LLAV…TWYI. An ABC transporter 1 domain is found at 990–1221; it reads VCVDKLTKVY…YGDGYRLTLV (232 aa). 1024 to 1031 lines the ATP pocket; it reads GHNGAGKT. Disordered stretches follow at residues 1223–1243 and 1325–1357; these read RPAE…PGRA and DQSL…GHAG. Phosphoserine occurs at positions 1238, 1327, and 1331. Basic and acidic residues predominate over residues 1333-1342; it reads ADVKESRKDV. Residue Asn1408 is glycosylated (N-linked (GlcNAc...) asparagine). A helical membrane pass occupies residues 1456–1476; sequence ALFSQILLPAFFVCVAMTVAL. 3 N-linked (GlcNAc...) asparagine glycosylation sites follow: Asn1496, Asn1549, and Asn1557. The segment at 1586–1610 is disordered; it reads SNFVPPPPSPAPSDSPASPDEDLQA. The span at 1589–1598 shows a compositional bias: pro residues; it reads VPPPPSPAPS. N-linked (GlcNAc...) asparagine glycosylation is found at Asn1612, Asn1677, and Asn1775. Transmembrane regions (helical) follow at residues 1792–1812, 1841–1861, 1872–1892, 1905–1925, and 1991–2011; these read VVIA…FVVF, VWDM…LFVF, FPAV…IMYP, VFLI…TFLL, and GLVA…MCQY. One can recognise an ABC transporter 2 domain in the interval 2050–2285; it reads VKIENLTKVY…FGDGYMITVR (236 aa). An N-linked (GlcNAc...) asparagine glycan is attached at Asn2054. An ATP-binding site is contributed by 2087–2094; sequence GVNGAGKT. Phosphothreonine is present on Thr2412.

The protein belongs to the ABC transporter superfamily. ABCA family. In terms of processing, methylated at Gln-271 by N6AMT1. Highly expressed in the brain,peripheral blood leukocytes and ovary, whereas lower levels of expression is observed in kidney and liver. In terms of tissue distribution, weakly expressed in brain and highly in peripheral blood leukocytes.

It is found in the endosome membrane. It localises to the lysosome membrane. Functionally, probable lipid transporter that modulates cholesterol sequestration in the late endosome/lysosome by regulating the intracellular sphingolipid metabolism, in turn participates in cholesterol homeostasis. May alter the transbilayer distribution of ceramide in the intraluminal membrane lipid bilayer, favoring its retention in the outer leaflet that results in increased acid ceramidase activity in the late endosome/lysosome, facilitating ceramide deacylation to sphingosine leading to the sequestration of free cholesterol in lysosomes. In addition regulates amyloid-beta production either by activating a signaling pathway that regulates amyloid precursor protein transcription through the modulation of sphingolipid metabolism or through its role in gamma-secretase processing of APP. May play a role in myelin formation. The polypeptide is ATP-binding cassette sub-family A member 2 (Homo sapiens (Human)).